The chain runs to 814 residues: Rho GTPase-activating protein 26 (814 aa).

One can recognise a BAR domain in the interval E7 to T262. Residues P265 to P369 enclose the PH domain. The Rho-GAP domain maps to A383–F568. Disordered stretches follow at residues S584 to S618 and S638 to S696. 2 stretches are compositionally biased toward low complexity: residues S591–P600 and S638–S661. Pro residues predominate over residues S662 to P672. Phosphoserine is present on S668. T670 is modified (phosphothreonine). S671 bears the Phosphoserine mark. Residues L673–S696 show a composition bias toward low complexity. The 59-residue stretch at T756–L814 folds into the SH3 domain.

As to quaternary structure, interacts with NYAP1, NYAP2 and MYO16. Interacts with MICAL1 and WDR44. Binds to the C-terminus of PTK2/FAK1. Post-translationally, phosphorylated in a PINK1-dependent fashion promoting retrograde mitochondrial trafficking and clustering.

It is found in the cell junction. The protein localises to the focal adhesion. The protein resides in the cytoplasm. Its subcellular location is the cytoskeleton. It localises to the endosome membrane. Functionally, GTPase-activating protein for RHOA and CDC42. Facilitates mitochondrial quality control by promoting Parkin-mediated recruitment of autophagosomes to damaged mitochondria. Associates with MICAL1 on the endosomal membrane to promote Rab8-Rab10-dependent tubule extension. After dissociation of MICAL1, recruits WDR44 which connects the endoplasmic reticulum (ER) with the endosomal tubule, thereby participating in the export of a subset of neosynthesized proteins. The protein is Rho GTPase-activating protein 26 (Arhgap26) of Mus musculus (Mouse).